Reading from the N-terminus, the 348-residue chain is D-alanine--D-alanine ligase (348 aa).

The ATP-grasp domain occupies 132 to 334; sequence KRVLESADIP…YAELIEELVR (203 aa). 162–217 contributes to the ATP binding site; sequence EAVLSYPVFVKPANMGSSVGISKAESEEELRAAILLALTYDSRILIEQGVLAREIE. Mg(2+)-binding residues include D288, E301, and N303.

It belongs to the D-alanine--D-alanine ligase family. Mg(2+) serves as cofactor. Requires Mn(2+) as cofactor.

The protein localises to the cytoplasm. It carries out the reaction 2 D-alanine + ATP = D-alanyl-D-alanine + ADP + phosphate + H(+). The protein operates within cell wall biogenesis; peptidoglycan biosynthesis. In terms of biological role, cell wall formation. The sequence is that of D-alanine--D-alanine ligase from Streptococcus equi subsp. zooepidemicus (strain MGCS10565).